The sequence spans 163 residues: MTKKDKGPKFANVTTKSGEVVKVFEDLNDFETFIKNETEDEEFDHVHCHLKYYPPFVLHESHEDPEKIKDSANSHSKKFVRHLHQHIEKHLLKDIKERIKLPDLKFKDKAKEESFEHIVWKYNDVTQYHGKDFEIHITVECHNDSAIVDVDYLTKPLTAAVEA.

It belongs to the RGI1 family.

The protein resides in the cell membrane. Involved in the control of energetic metabolism and significantly contribute to cell fitness, especially under respiratory growth conditions. The chain is Respiratory growth induced protein 1 (RGI1) from Kluyveromyces lactis (strain ATCC 8585 / CBS 2359 / DSM 70799 / NBRC 1267 / NRRL Y-1140 / WM37) (Yeast).